Consider the following 447-residue polypeptide: Gamma-glutamyl phosphate reductase (447 aa).

It belongs to the gamma-glutamyl phosphate reductase family.

It localises to the cytoplasm. The catalysed reaction is L-glutamate 5-semialdehyde + phosphate + NADP(+) = L-glutamyl 5-phosphate + NADPH + H(+). Its pathway is amino-acid biosynthesis; L-proline biosynthesis; L-glutamate 5-semialdehyde from L-glutamate: step 2/2. Catalyzes the NADPH-dependent reduction of L-glutamate 5-phosphate into L-glutamate 5-semialdehyde and phosphate. The product spontaneously undergoes cyclization to form 1-pyrroline-5-carboxylate. The chain is Gamma-glutamyl phosphate reductase from Methanosarcina mazei (strain ATCC BAA-159 / DSM 3647 / Goe1 / Go1 / JCM 11833 / OCM 88) (Methanosarcina frisia).